The sequence spans 866 residues: Thiamine diphosphate dependent-3-acetyloctanal synthase PigD (866 aa).

The segment at 826–866 (KGWQRDPSDREALQERKDWAARQPESTSTSFDQGQNKEAIS) is disordered. Residues 828 to 845 (WQRDPSDREALQERKDWA) are compositionally biased toward basic and acidic residues. The span at 849-866 (PESTSTSFDQGQNKEAIS) shows a compositional bias: polar residues.

The protein belongs to the TPP enzyme family. Thiamine diphosphate serves as cofactor.

The enzyme catalyses (2E)-octenal + pyruvate + H(+) = (S)-3-acetyloctanal + CO2. It functions in the pathway antibiotic biosynthesis; prodigiosin biosynthesis. Functionally, involved in the biosynthesis of 2-methyl-3-n-amyl-pyrrole (MAP), one of the terminal products involved in the biosynthesis of the red antibiotic prodigiosin (Pig). Catalyzes the decarboxylation of pyruvate, followed by the modification of the resulting two-carbon fragment acetaldehyde at the C3 position of the 2-octenal (1,2-addition of acetaldehyde) giving 3-acetyloctanal. The chain is Thiamine diphosphate dependent-3-acetyloctanal synthase PigD from Serratia sp. (strain ATCC 39006) (Prodigiosinella confusarubida).